The following is a 551-amino-acid chain: F-box only protein 31 (551 aa).

The tract at residues 12 to 38 (QSGGCRRRQQRKGAGNGPELEDEEEED) is disordered. The 47-residue stretch at 58–104 (PRSLLHLPPEILVEIFSSLPGTELPSLAQVCRKFRQILTTDTIWKRR) folds into the F-box domain. Zn(2+)-binding residues include Cys229, His237, Cys253, and His259. Positions 402-459 (REQRQTGNEEDDGRGAGPDKAEHSQQPAPVLRPANEDANKVDGGDGEEQKPPNVQSFV) are disordered. Basic and acidic residues-rich tracts occupy residues 414 to 424 (GRGAGPDKAEH) and 435 to 451 (ANEDANKVDGGDGEEQK).

This sequence belongs to the FBXO31 family. In terms of assembly, part of a SCF (SKP1-cullin-F-box) protein ligase complex SCF(FBXO31).

The protein localises to the cytoplasm. Its pathway is protein modification; protein ubiquitination. In terms of biological role, substrate-recognition component of the SCF(FBXO31) protein ligase complex, which specifically mediates the ubiquitination of proteins amidated at their C-terminus in response to oxidative stress, leading to their degradation by the proteasome. Fbxo31 specifically recognizes and binds C-terminal peptides bearing an amide: C-terminal amidation in response to oxidative stress takes place following protein fragmentation. The SCF(FBXO31) also plays a role in G1 arrest following DNA damage by mediating ubiquitination of phosphorylated cyclin-D1 (ccnd1), promoting its degradation by the proteasome, resulting in G1 arrest. The SCF(FBXO31) complex is however not a major regulator of ccnd1 stability during the G1/S transition. This chain is F-box only protein 31 (fbxo31), found in Xenopus tropicalis (Western clawed frog).